A 364-amino-acid chain; its full sequence is Alanine racemase (364 aa).

The active-site Proton acceptor; specific for D-alanine is the lysine 39. Lysine 39 carries the N6-(pyridoxal phosphate)lysine modification. Arginine 137 serves as a coordination point for substrate. Tyrosine 258 functions as the Proton acceptor; specific for L-alanine in the catalytic mechanism. Residue methionine 306 participates in substrate binding.

The protein belongs to the alanine racemase family. Pyridoxal 5'-phosphate is required as a cofactor.

It catalyses the reaction L-alanine = D-alanine. It participates in amino-acid biosynthesis; D-alanine biosynthesis; D-alanine from L-alanine: step 1/1. Its function is as follows. Catalyzes the interconversion of L-alanine and D-alanine. May also act on other amino acids. In Methylobacterium sp. (strain 4-46), this protein is Alanine racemase (alr).